The chain runs to 240 residues: MGQKIHPVGFRLGITKEHLSRWYADPKQYPALVQEDYKIRQHIDANLNNAGISKVLIERKADQVDLEIHTARPGVVVGRGGSGIEALRTGLQDVLGDQRQIRINVVEVNRVDADAALIAEYIVQQLERRVSFRRVVRQAVQRAQRAEVQGIKIQVSGRLNGAEIARTEWVREGRVPLHTLRADIDYSYKTAQTIYGILGIKVWIFKGEIIPGQEETSAANAAPLPRRKSRRQQFEDRSEQ.

The 71-residue stretch at 39–109 (IRQHIDANLN…QIRINVVEVN (71 aa)) folds into the KH type-2 domain. Residues 216-240 (TSAANAAPLPRRKSRRQQFEDRSEQ) are disordered.

It belongs to the universal ribosomal protein uS3 family. In terms of assembly, part of the 30S ribosomal subunit. Forms a tight complex with proteins S10 and S14.

Functionally, binds the lower part of the 30S subunit head. Binds mRNA in the 70S ribosome, positioning it for translation. In Picosynechococcus sp. (strain ATCC 27264 / PCC 7002 / PR-6) (Agmenellum quadruplicatum), this protein is Small ribosomal subunit protein uS3.